A 358-amino-acid polypeptide reads, in one-letter code: MNPFPRAEISSSALQTNLAALRQQAPASRVMAVVKANGYGHGLLNVANCLVSADGFGLARLDEALELRAGGVTARLLLLEGFFRATDLPLLVGHDIDTVVHHSSQLEMLEQTVLSKPVTVWLKVDSGMHRLGFTPEQFSTVYARLMACPNVAKPIHLMTHFACADEPDNSYTSVQMAAFNSLTAGLPGFRTLANSAGALYWPQSQGDWIRPGIALYGVSPVTGDCGANHGLVPAMELVSQLIAVRDHKANQPVGYGCFWTAKQDTRLGVVAIGYGDGYPRNAPEGTPVWVNGRRVPIVGRVSMDMLTVDLGQDAQDKVGDSALLWGKALPVEEVAEHIGTIAYELVTKLTPRVAVCLA.

The active-site Proton acceptor; specific for D-alanine is the Lys35. Lys35 is subject to N6-(pyridoxal phosphate)lysine. Residue Arg130 participates in substrate binding. Residue Tyr255 is the Proton acceptor; specific for L-alanine of the active site. Met303 is a binding site for substrate.

Belongs to the alanine racemase family. Pyridoxal 5'-phosphate serves as cofactor.

The enzyme catalyses L-alanine = D-alanine. It functions in the pathway amino-acid biosynthesis; D-alanine biosynthesis; D-alanine from L-alanine: step 1/1. In terms of biological role, catalyzes the interconversion of L-alanine and D-alanine. May also act on other amino acids. This is Alanine racemase (alr) from Shewanella baltica (strain OS185).